The chain runs to 462 residues: Dipeptidyl peptidase 1 (462 aa).

The first 24 residues, 1–24, serve as a signal peptide directing secretion; the sequence is MGPWTHSLRAVLLLVLLGVCTVRS. N-linked (GlcNAc...) asparagine glycosylation is found at N29 and N53. 5 disulfide bridges follow: C30–C118, C54–C136, C254–C297, C290–C330, and C320–C336. The propeptide occupies 135-230; it reads ACFVGKKVES…DEIQQQILNL (96 aa). Residue C257 is part of the active site. An N-linked (GlcNAc...) asparagine glycan is attached at N275. Residues F301 and Y303 each contribute to the chloride site. Chloride is bound at residue Y346. Active-site residues include H404 and N426.

The protein belongs to the peptidase C1 family. In terms of assembly, tetramer of heterotrimers consisting of exclusion domain, heavy- and light chains. Requires chloride as cofactor. Broadly distributed, but higher levels found in lung, liver, kidney and spleen. Lower levels found in testis and brain.

Its subcellular location is the lysosome. It carries out the reaction Release of an N-terminal dipeptide, Xaa-Yaa-|-Zaa-, except when Xaa is Arg or Lys, or Yaa or Zaa is Pro.. Functionally, thiol protease. Has dipeptidylpeptidase activity. Active against a broad range of dipeptide substrates composed of both polar and hydrophobic amino acids. Proline cannot occupy the P1 position and arginine cannot occupy the P2 position of the substrate. Can act as both an exopeptidase and endopeptidase. Activates serine proteases such as elastase, cathepsin G and granzymes A and B. The chain is Dipeptidyl peptidase 1 (Ctsc) from Mus musculus (Mouse).